The chain runs to 157 residues: uncharacterized protein (157 aa).

The N-acetyltransferase domain occupies 9 to 146; that stretch reads LLINYKTLDE…GDFYVWHPET (138 aa).

This is an uncharacterized protein from Bacillus anthracis (strain CDC 684 / NRRL 3495).